The primary structure comprises 510 residues: Proline--tRNA ligase 2 (510 aa).

It belongs to the class-II aminoacyl-tRNA synthetase family. ProS type 3 subfamily. Homodimer.

The protein localises to the cytoplasm. The catalysed reaction is tRNA(Pro) + L-proline + ATP = L-prolyl-tRNA(Pro) + AMP + diphosphate. Functionally, catalyzes the attachment of proline to tRNA(Pro) in a two-step reaction: proline is first activated by ATP to form Pro-AMP and then transferred to the acceptor end of tRNA(Pro). The chain is Proline--tRNA ligase 2 from Anaeromyxobacter dehalogenans (strain 2CP-C).